A 159-amino-acid chain; its full sequence is Transcription antitermination protein NusB (159 aa).

The protein belongs to the NusB family.

Functionally, involved in transcription antitermination. Required for transcription of ribosomal RNA (rRNA) genes. Binds specifically to the boxA antiterminator sequence of the ribosomal RNA (rrn) operons. In Xanthomonas campestris pv. campestris (strain 8004), this protein is Transcription antitermination protein NusB.